We begin with the raw amino-acid sequence, 445 residues long: tRNA-2-methylthio-N(6)-dimethylallyladenosine synthase (445 aa).

The MTTase N-terminal domain maps to 2–117 (QGLYIKSYGC…LPELIVKARK (116 aa)). Residues Cys11, Cys47, Cys80, Cys157, Cys161, and Cys164 each coordinate [4Fe-4S] cluster. Positions 143–374 (KNQKVSAFIS…QELVHKQQLE (232 aa)) constitute a Radical SAM core domain. The region spanning 377–441 (KKMIGETHPV…KNHLTGIIPH (65 aa)) is the TRAM domain.

Belongs to the methylthiotransferase family. MiaB subfamily. In terms of assembly, monomer. Requires [4Fe-4S] cluster as cofactor.

Its subcellular location is the cytoplasm. It carries out the reaction N(6)-dimethylallyladenosine(37) in tRNA + (sulfur carrier)-SH + AH2 + 2 S-adenosyl-L-methionine = 2-methylsulfanyl-N(6)-dimethylallyladenosine(37) in tRNA + (sulfur carrier)-H + 5'-deoxyadenosine + L-methionine + A + S-adenosyl-L-homocysteine + 2 H(+). Functionally, catalyzes the methylthiolation of N6-(dimethylallyl)adenosine (i(6)A), leading to the formation of 2-methylthio-N6-(dimethylallyl)adenosine (ms(2)i(6)A) at position 37 in tRNAs that read codons beginning with uridine. The chain is tRNA-2-methylthio-N(6)-dimethylallyladenosine synthase from Ehrlichia ruminantium (strain Gardel).